Consider the following 189-residue polypeptide: MDYIIAGLGNPGERYTFTRHNAGFLAIDYLAQAFNTKVDKIKFKGLTGSFEYADKKVLLLKPMTYMNSSGDSIVEAVNFYKVKPEKLIVIYDDIAFDVGVVKMRKKGSDGGHNGVKSIIQRLGTEEFPRIRIGIGVPKEDMVKYVLSEFEDYEKQKIFRAIEKAAQGIKILLESGIDRAMNYINGDVVV.

Position 15 (Tyr15) interacts with tRNA. His20 serves as the catalytic Proton acceptor. Residues Tyr65, Asn67, and Asn113 each coordinate tRNA.

Belongs to the PTH family. In terms of assembly, monomer.

It localises to the cytoplasm. It carries out the reaction an N-acyl-L-alpha-aminoacyl-tRNA + H2O = an N-acyl-L-amino acid + a tRNA + H(+). Hydrolyzes ribosome-free peptidyl-tRNAs (with 1 or more amino acids incorporated), which drop off the ribosome during protein synthesis, or as a result of ribosome stalling. In terms of biological role, catalyzes the release of premature peptidyl moieties from peptidyl-tRNA molecules trapped in stalled 50S ribosomal subunits, and thus maintains levels of free tRNAs and 50S ribosomes. This is Peptidyl-tRNA hydrolase from Caldicellulosiruptor saccharolyticus (strain ATCC 43494 / DSM 8903 / Tp8T 6331).